The primary structure comprises 263 residues: Lens fiber major intrinsic protein (263 aa).

Residues 1 to 9 (MWELRSASF) lie on the Cytoplasmic side of the membrane. The chain crosses the membrane as a helical span at residues 10–29 (WRAICAEFFASLFYVFFGLG). Over 30–41 (ASLRWAPGPLHV) the chain is Extracellular. The chain crosses the membrane as a helical span at residues 42–59 (LQVALAFGLALATLVQAV). Topologically, residues 60 to 61 (GH) are cytoplasmic. An intramembrane region (discontinuously helical) is located at residues 62–77 (ISGAHVNPAVTFAFLV). An NPA 1 motif is present at residues 68–70 (NPA). At 78–82 (GSQMS) the chain is on the cytoplasmic side. Residues 83–106 (LLRAICYMVAQLLGAVAGAAVLYS) traverse the membrane as a helical segment. The Extracellular segment spans residues 107 to 127 (VTPPAVRGNLALNTLHPGVSV). The helical transmembrane segment at 128–148 (GQATIVEIFLTLQFVLCIFAT) threads the bilayer. The Cytoplasmic segment spans residues 149-156 (YDERRNGR). The helical transmembrane segment at 157-175 (LGSVALAVGFSLTLGHLFG) threads the bilayer. Topologically, residues 176–178 (MYY) are extracellular. An intramembrane region (discontinuously helical) is located at residues 179–193 (TGAGMNPARSFAPAI). The NPA 2 motif lies at 184-186 (NPA). The Extracellular portion of the chain corresponds to 194 to 200 (LTRNFTN). Residues 201 to 222 (HWVYWVGPVIGAGLGSLLYDFL) form a helical membrane-spanning segment. Residues 223–263 (LFPRLKSVSERLSILKGSRPSESNGQPEVTGEPVELKTQAL) lie on the Cytoplasmic side of the membrane. The interaction with CALM stretch occupies residues 227-237 (LKSVSERLSIL). Ser235 carries the post-translational modification Phosphoserine. The tract at residues 239–263 (GSRPSESNGQPEVTGEPVELKTQAL) is disordered. Phosphoserine; by PKA is present on Ser243. Ser245 bears the Phosphoserine mark. Position 246 is a deamidated asparagine (Asn246).

This sequence belongs to the MIP/aquaporin (TC 1.A.8) family. As to quaternary structure, homotetramer; each monomer provides an independent water pore. Two homotetramers on opposing membranes can dimerize, forming a cell-cell junction. Interacts with CALM; the calcium-calmodulin/CALM complex interacts with the cytoplasmic domains of two aquaporins, leading to channel closure. Interacts with BFSP1 (via C-terminus); prevents calcium-dependent inhibition of the water channel activity. In terms of processing, fatty acylated at Met-1 and Lys-238. The acyl modifications, in decreasing order of ion abundance, are: oleoyl (C18:1) &gt; palmitoyl (C16:0) &gt; stearoyl (C18:0) &gt; eicosenoyl (C20:1) &gt; dihomo-gamma-linolenoyl (C20:3) &gt; palmitoleoyl (C16:1) &gt; eicosadienoyl (C20:2). Subject to partial proteolytic cleavage in the eye lens core. Partial proteolysis promotes interactions between tetramers from adjoining membranes. In terms of tissue distribution, major component of lens fiber junctions.

The protein localises to the cell membrane. It is found in the cell junction. It carries out the reaction H2O(in) = H2O(out). Its activity is regulated as follows. The water channel activity is inhibited by calcium through calmodulin/CALM. Functionally, aquaporins form homotetrameric transmembrane channels, with each monomer independently mediating water transport across the plasma membrane along its osmotic gradient. Specifically expressed in lens fiber cells, this aquaporin is crucial for maintaining lens water homeostasis and transparency. Beyond water permeability, it also acts as a cell-to-cell adhesion molecule, forming thin junctions between lens fiber cells that are essential for maintaining the ordered structure and transparency of the lens. The sequence is that of Lens fiber major intrinsic protein from Bos taurus (Bovine).